Consider the following 336-residue polypeptide: MSAQVIAIDAMGGDFGPRSIVQASLACLSATPSLHLTLVGQPSLLEELITGQSAADRARLTIVPASEVITMDEKPAQALRGKPDSSMRVALELLRDGKVQACVSAGNTGALMALSRFVLKTLPGIDRPAMVAAIPTQKGYCQLLDLGANVDCSAEHLLQFAVMGSVAAQTLGIARPRVALLNIGTEDIKGNQQVKLAATLLQAARGINYIGFIEGDGLYRGEADVVVCDGFVGNILLKSSEGLATMIAARIEALFKKNLASRAVGALALPLMRRLQADLAPARHNGASFLGLQGIVVKSHGSAGVQGFQSAIQRALIEIQENLPERLHGRLEDLLS.

Belongs to the PlsX family. In terms of assembly, homodimer. Probably interacts with PlsY.

It localises to the cytoplasm. It catalyses the reaction a fatty acyl-[ACP] + phosphate = an acyl phosphate + holo-[ACP]. It participates in lipid metabolism; phospholipid metabolism. In terms of biological role, catalyzes the reversible formation of acyl-phosphate (acyl-PO(4)) from acyl-[acyl-carrier-protein] (acyl-ACP). This enzyme utilizes acyl-ACP as fatty acyl donor, but not acyl-CoA. The chain is Phosphate acyltransferase from Pseudomonas fluorescens (strain Pf0-1).